The primary structure comprises 453 residues: Growth/differentiation factor 9 (453 aa).

Positions 1–27 (MALPNKFFLWFCCFAWLCFPISLDSLP) are cleaved as a signal peptide. A propeptide spanning residues 28-318 (SRGEAQIVAR…EGVRSSRHRR (291 aa)) is cleaved from the precursor. 4 N-linked (GlcNAc...) asparagine glycosylation sites follow: asparagine 163, asparagine 236, asparagine 255, and asparagine 269. Residues 282–328 (LHPKRKPSQGPDQRRELSAYPVGEEAAEGVRSSRHRRDQESVSSELK) are disordered. A compositionally biased stretch (basic and acidic residues) spans 318-328 (RDQESVSSELK). N-linked (GlcNAc...) asparagine glycosylation is present at asparagine 337. 3 cysteine pairs are disulfide-bonded: cysteine 352/cysteine 418, cysteine 381/cysteine 450, and cysteine 385/cysteine 452.

It belongs to the TGF-beta family. As to quaternary structure, homodimer or heterodimer (Potential). But, in contrast to other members of this family, cannot be disulfide-linked. In terms of processing, phosphorylated; phosphorylation is critical for GDF9 function.

The protein localises to the secreted. Required for ovarian folliculogenesis. The sequence is that of Growth/differentiation factor 9 (GDF9) from Capra hircus (Goat).